The chain runs to 215 residues: Small ribosomal subunit protein uS3c (215 aa).

The KH type-2 domain maps to Ile43–Ala116.

The protein belongs to the universal ribosomal protein uS3 family. In terms of assembly, part of the 30S ribosomal subunit.

The protein localises to the plastid. It is found in the chloroplast. The polypeptide is Small ribosomal subunit protein uS3c (rps3) (Morus indica (Mulberry)).